The sequence spans 221 residues: Protein-L-isoaspartate O-methyltransferase (221 aa).

Serine 70 is a catalytic residue.

The protein belongs to the methyltransferase superfamily. L-isoaspartyl/D-aspartyl protein methyltransferase family.

The protein resides in the cytoplasm. The catalysed reaction is [protein]-L-isoaspartate + S-adenosyl-L-methionine = [protein]-L-isoaspartate alpha-methyl ester + S-adenosyl-L-homocysteine. Functionally, catalyzes the methyl esterification of L-isoaspartyl residues in peptides and proteins that result from spontaneous decomposition of normal L-aspartyl and L-asparaginyl residues. It plays a role in the repair and/or degradation of damaged proteins. The polypeptide is Protein-L-isoaspartate O-methyltransferase (Alkalilimnicola ehrlichii (strain ATCC BAA-1101 / DSM 17681 / MLHE-1)).